Consider the following 465-residue polypeptide: Keratin, type I cytoskeletal 13 (465 aa).

Residues 1-28 show a composition bias toward polar residues; that stretch reads MNFTSFSITQGSRPQPPSTRGFSGNSFK. The segment at 1 to 47 is disordered; the sequence is MNFTSFSITQGSRPQPPSTRGFSGNSFKSDLIPQSRRSHSVYGTPGS. The head stretch occupies residues 1–98; the sequence is MNFTSFSITQ…SGGSDLLLGT (98 aa). The segment at 99 to 135 is coil 1A; sequence SGKEAMQNLNDRLASYLEKVRSLEERNRELEQKIREW. The region spanning 100-412 is the IF rod domain; sequence GKEAMQNLND…ILLEGDEGKF (313 aa). The linker 1 stretch occupies residues 136–154; the sequence is YEKQGAGTKTKDFSHYFKI. The interval 155-246 is coil 1B; that stretch reads IADLQKQIHD…KSHDEEMKAL (92 aa). Residues 247–269 form a linker 12 region; sequence RSQLGGQVNVEVDAAPAEDLTKK. Positions 270–408 are coil 2; sequence LERMRQQYEQ…RTYRILLEGD (139 aa). Residues 409–465 form a tail region; sequence EGKFQTSPHHPSIVTKQTETVVTPVVITNVKTVVEEIIDGKIVSKKEYPGPPEKLMI.

It belongs to the intermediate filament family. Heterotetramer of two type I and two type II keratins. As to expression, expressed in skin.

Its function is as follows. Type 1 keratin. May maintain oral mucosal cell homeostasis and tissue organization in response to mechanical stress. The sequence is that of Keratin, type I cytoskeletal 13 (KRT13) from Protopterus aethiopicus (Marbled lungfish).